Consider the following 330-residue polypeptide: DNA-directed RNA polymerase subunit alpha (330 aa).

The interval 1 to 231 (MQTNLLKPKA…EQLAVFAQLE (231 aa)) is alpha N-terminal domain (alpha-NTD). The alpha C-terminal domain (alpha-CTD) stretch occupies residues 250-330 (FDPILLRPVD…NWPPAGLDKR (81 aa)).

This sequence belongs to the RNA polymerase alpha chain family. In terms of assembly, homodimer. The RNAP catalytic core consists of 2 alpha, 1 beta, 1 beta' and 1 omega subunit. When a sigma factor is associated with the core the holoenzyme is formed, which can initiate transcription.

It carries out the reaction RNA(n) + a ribonucleoside 5'-triphosphate = RNA(n+1) + diphosphate. DNA-dependent RNA polymerase catalyzes the transcription of DNA into RNA using the four ribonucleoside triphosphates as substrates. The chain is DNA-directed RNA polymerase subunit alpha from Acidovorax ebreus (strain TPSY) (Diaphorobacter sp. (strain TPSY)).